A 208-amino-acid chain; its full sequence is MGYCSGRCTLIFICGMQLVCVLERQIFDFLGYQWAPILANFVHIIIVILGLFGTIQYRPRYITGYAVWLVLWVTWNVFVICFYLEAGDLSKETDLILTFNISMHRSWWMENGPGCTVTSVTPAPDWAPEDHRYITVSGCLLEYQYIEVAHSSLQIVLALAGFIYACYVVKCITEEEDSFDFIGGFDSYGYQGPQKTSHLQLQPMYMSK.

4 helical membrane passes run 1-23 (MGYCSGRCTLIFICGMQLVCVLE), 35-55 (APILANFVHIIIVILGLFGTI), 62-82 (ITGYAVWLVLWVTWNVFVICF), and 153-173 (LQIVLALAGFIYACYVVKCIT).

Belongs to the NKAIN family. As to quaternary structure, interacts with ATP1B1. In terms of tissue distribution, expressed in fetal brain. Weakly expressed in adult brain and thymus. Not expressed in any other normal tissue examined.

It localises to the cell membrane. The sequence is that of Sodium/potassium-transporting ATPase subunit beta-1-interacting protein 2 (NKAIN2) from Homo sapiens (Human).